The following is a 307-amino-acid chain: Agmatinase (307 aa).

Mn(2+)-binding residues include H126, D149, H151, D153, D230, and D232.

It belongs to the arginase family. Agmatinase subfamily. The cofactor is Mn(2+).

The enzyme catalyses agmatine + H2O = urea + putrescine. It participates in amine and polyamine biosynthesis; putrescine biosynthesis via agmatine pathway; putrescine from agmatine: step 1/1. Functionally, catalyzes the formation of putrescine from agmatine. The sequence is that of Agmatinase from Sodalis glossinidius (strain morsitans).